Consider the following 475-residue polypeptide: Beta-amyrin 16-alpha-hydroxylase CYP87D16 (475 aa).

The chain crosses the membrane as a helical span at residues 3–23 (VVGLIGVAVVTILITQYVYKW). Cys-423 is a binding site for heme.

This sequence belongs to the cytochrome P450 family. Heme serves as cofactor.

Its subcellular location is the membrane. It catalyses the reaction beta-amyrin + reduced [NADPH--hemoprotein reductase] + O2 = 16alpha-hydroxy-beta-amyrin + oxidized [NADPH--hemoprotein reductase] + H2O + H(+). Its function is as follows. Involved in the biosynthetic pathway of maesasaponins, which are oleanane-type saponins with diverse biological activities. Catalyzes the C-16alpha oxidation of beta-amyrin to form 16alpha-hydroxy-beta-amyrin. The sequence is that of Beta-amyrin 16-alpha-hydroxylase CYP87D16 from Maesa lanceolata (False assegai).